Here is a 189-residue protein sequence, read N- to C-terminus: Putative biopolymer transport protein ExbB-like 1 (189 aa).

Transmembrane regions (helical) follow at residues 14–34, 99–119, and 147–167; these read FVTT…LWVF, LVVL…GTVV, and LIAT…YLIL.

This sequence belongs to the ExbB/TolQ family.

It is found in the cell inner membrane. In Helicobacter pylori (strain ATCC 700392 / 26695) (Campylobacter pylori), this protein is Putative biopolymer transport protein ExbB-like 1.